The following is a 407-amino-acid chain: Imidazolonepropionase (407 aa).

Residues His-68 and His-70 each coordinate Fe(3+). His-68 and His-70 together coordinate Zn(2+). Arg-77, Tyr-140, and His-173 together coordinate 4-imidazolone-5-propanoate. Tyr-140 is a binding site for N-formimidoyl-L-glutamate. His-238 provides a ligand contact to Fe(3+). His-238 contacts Zn(2+). Position 241 (Gln-241) interacts with 4-imidazolone-5-propanoate. Residue Asp-313 participates in Fe(3+) binding. Asp-313 provides a ligand contact to Zn(2+). Asn-315 and Gly-317 together coordinate N-formimidoyl-L-glutamate. Thr-318 is a binding site for 4-imidazolone-5-propanoate.

Belongs to the metallo-dependent hydrolases superfamily. HutI family. Requires Zn(2+) as cofactor. Fe(3+) is required as a cofactor.

It localises to the cytoplasm. The catalysed reaction is 4-imidazolone-5-propanoate + H2O = N-formimidoyl-L-glutamate. The protein operates within amino-acid degradation; L-histidine degradation into L-glutamate; N-formimidoyl-L-glutamate from L-histidine: step 3/3. In terms of biological role, catalyzes the hydrolytic cleavage of the carbon-nitrogen bond in imidazolone-5-propanoate to yield N-formimidoyl-L-glutamate. It is the third step in the universal histidine degradation pathway. The polypeptide is Imidazolonepropionase (Burkholderia orbicola (strain MC0-3)).